Reading from the N-terminus, the 78-residue chain is Vacuolar ATPase assembly integral membrane protein VMA21 (78 aa).

Residues 1–14 (MPADIPKSVVQKLV) are Cytoplasmic-facing. The helical transmembrane segment at 15–35 (FFTAAMIICPVATFFICQYLF) threads the bilayer. Over 36–38 (SNN) the chain is Lumenal. The helical transmembrane segment at 39–59 (AIISGGVSALVANIVLIGYVV) threads the bilayer. Topologically, residues 60–78 (AAFMEDTTEQEPEETKKSR) are cytoplasmic. The short motif at 75-78 (KKSR) is the Prevents secretion from ER element.

Belongs to the VMA21 family.

The protein resides in the endoplasmic reticulum membrane. It is found in the endoplasmic reticulum-Golgi intermediate compartment membrane. It localises to the cytoplasmic vesicle. The protein localises to the COPII-coated vesicle membrane. Its function is as follows. Required for the assembly of the V0 complex of the vacuolar ATPase (V-ATPase) in the endoplasmic reticulum. The polypeptide is Vacuolar ATPase assembly integral membrane protein VMA21 (Debaryomyces hansenii (strain ATCC 36239 / CBS 767 / BCRC 21394 / JCM 1990 / NBRC 0083 / IGC 2968) (Yeast)).